Consider the following 280-residue polypeptide: MSWIKDQVILLTGGGSGLGLALIERFIAEGAKVGVLELSAEKATALAHCFGNDICVIHGDVVSFEDNERAVAETVRCFGKLDCFVGNAGIWDHKISLLDASPEQIDKGFDELMGVNLKGYILGAKAALPALTASEGSMIFTLSNSSWFSGGGGVLYTASKHGAVGMIRQLAYELAPVIRVNGVAPCGMPSDLRGAASLSQQDRCITDNLSLESLSAILPLQFIPQPKDFTGPYVMLASRANNRTLTGVMITADAGLSIRGIRQTTAGVMSPTKKESSDDR.

Residue S143 coordinates substrate. Y156 functions as the Proton acceptor in the catalytic mechanism.

Belongs to the short-chain dehydrogenases/reductases (SDR) family.

It carries out the reaction 3-(cis-5,6-dihydroxycyclohexa-1,3-dien-1-yl)propanoate + NAD(+) = 3-(2,3-dihydroxyphenyl)propanoate + NADH + H(+). It catalyses the reaction (2E)-3-(cis-5,6-dihydroxycyclohexa-1,3-dien-1-yl)prop-2-enoate + NAD(+) = (2E)-3-(2,3-dihydroxyphenyl)prop-2-enoate + NADH + H(+). Its pathway is aromatic compound metabolism; 3-phenylpropanoate degradation. Functionally, converts 3-phenylpropionate-dihydrodiol (PP-dihydrodiol) and cinnamic acid-dihydrodiol (CI-dihydrodiol) into 3-(2,3-dihydroxylphenyl)propanoic acid (DHPP) and 2,3-dihydroxicinnamic acid (DHCI), respectively. The polypeptide is 3-phenylpropionate-dihydrodiol/cinnamic acid-dihydrodiol dehydrogenase (Photorhabdus laumondii subsp. laumondii (strain DSM 15139 / CIP 105565 / TT01) (Photorhabdus luminescens subsp. laumondii)).